Reading from the N-terminus, the 92-residue chain is Bombyxin A-4 (92 aa).

The first 19 residues, 1–19 (MKILLAIALMLSTVMWVST), serve as a signal peptide directing secretion. Gln-20 carries the post-translational modification Pyrrolidone carboxylic acid. 3 disulfide bridges follow: Cys-29-Cys-79, Cys-41-Cys-92, and Cys-78-Cys-83. Positions 50 to 70 (SGAQFASYGSAWLMPYSEGRG) are cleaved as a propeptide — c peptide like.

The protein belongs to the insulin family. In terms of assembly, heterodimer of a B chain and an A chain linked by two disulfide bonds.

The protein resides in the secreted. Functionally, brain peptide responsible for activation of prothoracic glands to produce ecdysone in insects. This Bombyx mori (Silk moth) protein is Bombyxin A-4 (BBXA4).